Here is an 88-residue protein sequence, read N- to C-terminus: UPF0297 protein EAT1b_2723 (88 aa).

This sequence belongs to the UPF0297 family.

This Exiguobacterium sp. (strain ATCC BAA-1283 / AT1b) protein is UPF0297 protein EAT1b_2723.